The chain runs to 207 residues: Ubiquinol-cytochrome c reductase iron-sulfur subunit (207 aa).

A helical transmembrane segment spans residues 24–44; the sequence is LVAATSVVGAVGAGYALVPFV. The 100-residue stretch at 100–199 folds into the Rieske domain; that stretch reads PKLVDPTSEV…HVYLNDTTIL (100 aa). Residues cysteine 134, histidine 136, cysteine 162, and histidine 165 each contribute to the [2Fe-2S] cluster site. A disulfide bond links cysteine 139 and cysteine 164.

As to quaternary structure, the main subunits of complex b-c1 are: cytochrome b, cytochrome c1 and the Rieske protein. [2Fe-2S] cluster is required as a cofactor.

The protein resides in the cell membrane. It catalyses the reaction a quinol + 2 Fe(III)-[cytochrome c](out) = a quinone + 2 Fe(II)-[cytochrome c](out) + 2 H(+)(out). Functionally, component of the ubiquinol-cytochrome c reductase complex (complex III or cytochrome b-c1 complex), which is a respiratory chain that generates an electrochemical potential coupled to ATP synthesis. The polypeptide is Ubiquinol-cytochrome c reductase iron-sulfur subunit (petA) (Allochromatium vinosum (strain ATCC 17899 / DSM 180 / NBRC 103801 / NCIMB 10441 / D) (Chromatium vinosum)).